The primary structure comprises 404 residues: Caspase-1 (404 aa).

One can recognise a CARD domain in the interval 1–91 (MADKVLKEKR…YLAGTLGLSA (91 aa)). A propeptide spanning residues 1 to 119 (MADKVLKEKR…SFPAPQAVQD (119 aa)) is cleaved from the precursor. Residue lysine 134 forms a Glycyl lysine isopeptide (Lys-Gly) (interchain with G-Cter in ubiquitin) linkage. Residues histidine 237 and cysteine 285 contribute to the active site. Residues 298–316 (SVGVSGNLSLPTTEEFEDD) constitute a propeptide, interdomain linker. Position 302 is a phosphoserine (serine 302).

Belongs to the peptidase C14A family. As to quaternary structure, heterotetramer that consists of two anti-parallel arranged heterodimers, each one formed by a 20 kDa (Caspase-1 subunit p20) and a 10 kDa (Caspase-1 subunit p10) subunit. May be a component of the inflammasome, a protein complex which also includes PYCARD, CARD8 and NLRP2 and whose function would be the activation of pro-inflammatory caspases. Component of the AIM2 PANoptosome complex, a multiprotein complex that drives inflammatory cell death (PANoptosis). Interacts with CARD8; interacts with the released C-terminus of CARD8 which forms an inflammasome and directly activates CASP1 to promote pyroptosis. Both the p10 and p20 subunits interact with MEFV. Interacts with CARD17P/INCA and CARD18. Interacts with SERPINB1; this interaction regulates CASP1 activity. In terms of assembly, heterotetramer that consists of two anti-parallel arranged heterodimers, each one formed by a 20 kDa (Caspase-1 subunit p20) and a 10 kDa (Caspase-1 subunit p10) subunit. Can form a heterodimer with isoform epsilon which then has an inhibitory effect. Heterotetramer that consists of two anti-parallel arranged heterodimers, each one formed by a 20 kDa (Caspase-1 subunit p20) and a 10 kDa (Caspase-1 subunit p10) subunit. As to quaternary structure, can form a heterodimer with Caspase-1 subunit p20 which then has an inhibitory effect. In terms of processing, the two subunits are derived from the precursor sequence by an autocatalytic mechanism. Ubiquitinated via 'Lys-11'-linked polyubiquitination. Deubiquitinated by USP8. Post-translationally, cleavage in the interdomain linker region is required to induce pyroptosis. In terms of tissue distribution, expressed in larger amounts in spleen and lung. Detected in liver, heart, small intestine, colon, thymus, prostate, skeletal muscle, peripheral blood leukocytes, kidney and testis. No expression in the brain.

The protein resides in the cytoplasm. It is found in the cell membrane. It catalyses the reaction Strict requirement for an Asp residue at position P1 and has a preferred cleavage sequence of Tyr-Val-Ala-Asp-|-.. Its activity is regulated as follows. (Microbial infection) Specifically inhibited by the cowpox virus Crma protein. Its function is as follows. Thiol protease involved in a variety of inflammatory processes by proteolytically cleaving other proteins, such as the precursors of the inflammatory cytokines interleukin-1 beta (IL1B) and interleukin 18 (IL18) as well as the pyroptosis inducer Gasdermin-D (GSDMD), into active mature peptides. Plays a key role in cell immunity as an inflammatory response initiator: once activated through formation of an inflammasome complex, it initiates a pro-inflammatory response through the cleavage of the two inflammatory cytokines IL1B and IL18, releasing the mature cytokines which are involved in a variety of inflammatory processes. Cleaves a tetrapeptide after an Asp residue at position P1. Also initiates pyroptosis, a programmed lytic cell death pathway, through cleavage of GSDMD. In contrast to cleavage of interleukin IL1B, recognition and cleavage of GSDMD is not strictly dependent on the consensus cleavage site but depends on an exosite interface on CASP1 that recognizes and binds the Gasdermin-D, C-terminal (GSDMD-CT) part. Cleaves and activates CASP7 in response to bacterial infection, promoting plasma membrane repair. Upon inflammasome activation, during DNA virus infection but not RNA virus challenge, controls antiviral immunity through the cleavage of CGAS, rendering it inactive. In apoptotic cells, cleaves SPHK2 which is released from cells and remains enzymatically active extracellularly. In terms of biological role, apoptosis inactive. The sequence is that of Caspase-1 (CASP1) from Homo sapiens (Human).